We begin with the raw amino-acid sequence, 489 residues long: Nuclear distribution protein PAC1 (489 aa).

Residues 66 to 98 (STVLRLQKKIIDLENEISNLNNIINSSNSDNNG) adopt a coiled-coil conformation. 7 WD repeats span residues 119–158 (QCEN…NTIP), 164–205 (AHTR…RTLN), 206–246 (GHEH…SLKS), 249–291 (GHSE…GLAM), 328–368 (IPLE…IAPH), 389–428 (GHSS…ETGS), and 437–486 (GHDG…NSIK).

It belongs to the WD repeat LIS1/nudF family. In terms of assembly, self-associates. Interacts with NDL1 and dynein.

The protein resides in the cytoplasm. It is found in the cytoskeleton. It localises to the spindle pole. Positively regulates the activity of the minus-end directed microtubule motor protein dynein. Plays a central role in positioning the mitotic spindle at the bud neck during cell division. Targets cytoplasmic dynein to microtubule plus ends, thereby promoting dynein-mediated microtubule sliding along the bud cortex and consequently the movement of the mitotic spindle to the bud neck. This is Nuclear distribution protein PAC1 from Candida dubliniensis (strain CD36 / ATCC MYA-646 / CBS 7987 / NCPF 3949 / NRRL Y-17841) (Yeast).